The following is a 221-amino-acid chain: Glutathione S-transferase alpha-3 (221 aa).

One can recognise a GST N-terminal domain in the interval glycine 3–glycine 83. The residue at position 4 (lysine 4) is an N6-succinyllysine. Glutathione-binding positions include tyrosine 9, arginine 45, glutamine 54–valine 55, and glutamine 67–threonine 68. The 123-residue stretch at aspartate 85–leucine 207 folds into the GST C-terminal domain.

Belongs to the GST superfamily. Alpha family. In terms of assembly, heterodimer of YC1 and YC2.

Its subcellular location is the cytoplasm. It carries out the reaction RX + glutathione = an S-substituted glutathione + a halide anion + H(+). The catalysed reaction is androst-5-ene-3,17-dione = androst-4-ene-3,17-dione. It catalyses the reaction pregn-5-ene-3,20-dione = progesterone. In terms of biological role, conjugation of reduced glutathione to a wide number of exogenous and endogenous hydrophobic electrophiles. Catalyzes isomerization reactions that contribute to the biosynthesis of steroid hormones. Efficiently catalyze obligatory double-bond isomerizations of delta(5)-androstene-3,17-dione and delta(5)-pregnene-3,20-dione, precursors to testosterone and progesterone, respectively. Has substantial activity toward aflatoxin B1-8,9-epoxide. This is Glutathione S-transferase alpha-3 from Rattus norvegicus (Rat).